The following is a 242-amino-acid chain: uncharacterized protein (242 aa).

This is an uncharacterized protein from Haemophilus influenzae (strain ATCC 51907 / DSM 11121 / KW20 / Rd).